A 354-amino-acid polypeptide reads, in one-letter code: Phosphatidylserine decarboxylase proenzyme (354 aa).

The chain crosses the membrane as a helical span at residues 18–36 (YLITGVTILSFILMFQYKY). Residues aspartate 139, histidine 198, and serine 308 each act as charge relay system; for autoendoproteolytic cleavage activity in the active site. The Schiff-base intermediate with substrate; via pyruvic acid; for decarboxylase activity role is filled by serine 308. The residue at position 308 (serine 308) is a Pyruvic acid (Ser); by autocatalysis.

It belongs to the phosphatidylserine decarboxylase family. PSD-B subfamily. Eukaryotic type I sub-subfamily. As to quaternary structure, heterodimer of a large membrane-associated beta subunit and a small pyruvoyl-containing alpha subunit. Requires pyruvate as cofactor. Is synthesized initially as an inactive proenzyme. Formation of the active enzyme involves a self-maturation process in which the active site pyruvoyl group is generated from an internal serine residue via an autocatalytic post-translational modification. Two non-identical subunits are generated from the proenzyme in this reaction, and the pyruvate is formed at the N-terminus of the alpha chain, which is derived from the carboxyl end of the proenzyme. The autoendoproteolytic cleavage occurs by a canonical serine protease mechanism, in which the side chain hydroxyl group of the serine supplies its oxygen atom to form the C-terminus of the beta chain, while the remainder of the serine residue undergoes an oxidative deamination to produce ammonia and the pyruvoyl prosthetic group on the alpha chain. During this reaction, the Ser that is part of the protease active site of the proenzyme becomes the pyruvoyl prosthetic group, which constitutes an essential element of the active site of the mature decarboxylase.

It is found in the membrane. It localises to the endoplasmic reticulum membrane. It catalyses the reaction a 1,2-diacyl-sn-glycero-3-phospho-L-serine + H(+) = a 1,2-diacyl-sn-glycero-3-phosphoethanolamine + CO2. Its pathway is phospholipid metabolism; phosphatidylethanolamine biosynthesis; phosphatidylethanolamine from CDP-diacylglycerol: step 2/2. With respect to regulation, protease activity is inhibited by PMSF. In terms of biological role, catalyzes the formation of phosphatidylethanolamine (PtdEtn) from phosphatidylserine (PtdSer). Plays a central role in phospholipid metabolism and in the interorganelle trafficking of phosphatidylserine. In Plasmodium knowlesi (strain H), this protein is Phosphatidylserine decarboxylase proenzyme.